The chain runs to 1171 residues: MSLRFVIGRAGSGKSTLCLHEVQEELKQRPRGKTILYLVPEQMTFQTQQALIGSEDVRGSIRAQVFSFSRLAWKVLQEVGGASRLHIDEAGVHMLLRKIVESRKDGLSVFQKAAEQNGFFEHLGSMIAEFKRYNVTPSNVYEMWQQLDTHSSSAEQKLLANKVYDLQLLYDDFERALIGKYLDSEDYLQLLIEKLSDSEYVKGAEIYIDGFHSFSPQELEIVRGLMRLGTRVTITLTIDEKTLAQPVNELDLFYETTLTYERIKQVAREEKIEVEKTIPLMKQPRFHSQALAHLEMHYEARPNEKFHGEASVTISTAANLRAEVEGVAREIRRLVATEDYRYRDIAVLLRNGESYYDVMRTLFTDYNIPHFIDEKRPMSHHPLVECIRSALEIISGNWRYDAVFRCVKTELLYPLDVRKEAMREEMDEFENYCLAYGVQGKRWTSEDPWMYRRYRSLDDASEMITDSEREMEEKINRLRDVVRTPVIRMQKRLKRAGTVMQMCEAVYLFLEELDVPKKLEALRIRAEESGDFLFATDHEQVWEEVMSLLDTFVEMLGEEKMSLSMFTDVMTTGLEALQFANIPPSLDQVLVANIDHSRLSDIKATFIIGVNEGVIPAAPMDEGMLSDEERNVLTAAGIELAPTTRQTLLEEQFVMYQMVTRASEKLYISCPLADEEGKTLLASSFIKKIKRMFPDVKESFITNDVNDLSRSEQLSYVATPEVTLSYVMQQLQTWKRYGFEGNLDFWWDVYNFYVTSDEWKQKSSRVLSSLFYRNRAQKLSTDVSRDLYGDTIKGSVSRMELFNRCAYAHFAQHGLSLRERDIFKLDAPDIGELFHAALKRIADKLLRENRTWADLSIKECEHLSALVIEEIAPLLQRQILLSSNRHFYLKQKLQQIIFRTSLILREHAKSSGFVPVDLEVPFGMGGTGSLPPMEFALPNGVKMEVVGRIDRVDKAEDESGTFLRIIDYKSSSKALDLTEVYYGLALQMLTYLDVVTSNAHTWMKKGSTASPAGVLYFHIHNPIVEMKGDASEEEIEKEILKKFKMKGLVLGDADVVRLMDNKLSTGSSDIISAGLKKDGSFSARSSIASEQEFNVLQKYVHHSFENIGKDITEGVIDIAPYKKGNKAACTFCNFKSVCQFDESLEDNQFRTLKDMKDSEAMEKIREEVGGE.

The UvrD-like helicase ATP-binding domain maps to 1-301 (MSLRFVIGRA…AHLEMHYEAR (301 aa)). Position 8–15 (8–15 (GRAGSGKS)) interacts with ATP. The 307-residue stretch at 281 to 587 (MKQPRFHSQA…QFANIPPSLD (307 aa)) folds into the UvrD-like helicase C-terminal domain. [4Fe-4S] cluster contacts are provided by cysteine 805, cysteine 1129, cysteine 1132, and cysteine 1138.

Belongs to the helicase family. AddB/RexB type 1 subfamily. As to quaternary structure, heterodimer of AddA and AddB. The cofactor is Mg(2+). Requires [4Fe-4S] cluster as cofactor.

Functionally, the heterodimer acts as both an ATP-dependent DNA helicase and an ATP-dependent, dual-direction single-stranded exonuclease. Recognizes the chi site generating a DNA molecule suitable for the initiation of homologous recombination. The AddB subunit has 5' -&gt; 3' nuclease activity but not helicase activity. The chain is ATP-dependent helicase/deoxyribonuclease subunit B from Bacillus mycoides (strain KBAB4) (Bacillus weihenstephanensis).